The chain runs to 725 residues: Probable alpha-galactosidase G (725 aa).

A glycan (N-linked (GlcNAc...) asparagine) is linked at N407. The active-site Nucleophile is the D484. N490 carries an N-linked (GlcNAc...) asparagine glycan. Residue D546 is the Proton donor of the active site. N672 carries an N-linked (GlcNAc...) asparagine glycan.

It belongs to the glycosyl hydrolase 36 family. In terms of assembly, homotetramer. The cofactor is Mg(2+). NAD(+) serves as cofactor.

It is found in the secreted. The catalysed reaction is Hydrolysis of terminal, non-reducing alpha-D-galactose residues in alpha-D-galactosides, including galactose oligosaccharides, galactomannans and galactolipids.. Hydrolyzes a variety of simple alpha-D-galactoside as well as more complex molecules such as oligosaccharides and polysaccharides. The polypeptide is Probable alpha-galactosidase G (aglG) (Aspergillus terreus (strain NIH 2624 / FGSC A1156)).